The chain runs to 493 residues: Calcium-binding tyrosine phosphorylation-regulated protein (493 aa).

The RIIa domain occupies 12-49; it reads YGLKTLLEGISRAVLKTNPSNINQFAAAYFQELTMYRG. Disordered regions lie at residues 85–164, 244–271, 330–354, and 426–493; these read EPGK…VSPE, DLGS…QEPP, NEQS…TTSG, and IVSD…STAE. The span at 90–100 shows a compositional bias: polar residues; that stretch reads SVESKVPTQME. Basic and acidic residues predominate over residues 101–117; it reads KSTDTDEDNVTRTEYSD. Residues 141 to 152 show a composition bias toward low complexity; the sequence is SSKPATPKTTTP. T151 bears the Phosphothreonine mark. Position 155 is a phosphoserine (S155). Polar residues-rich tracts occupy residues 426 to 442 and 461 to 470; these read IVSD…NSVP and SGTSVKSSSG. Over residues 484-493 the composition is skewed to acidic residues; sequence IEPEGESTAE.

As to quaternary structure, interacts with FSCB. Isoform 3 self-associates. Isoform 3 and isoform 5 interact with GSK3B. Isoform 1 does not interact with GSK3B. Isoform 1 is phosphorylated on tyrosine residues during in vitro capacitation. Isoform 3 and isoform 5 are phosphorylated by GSK3B in vitro. Dephosphorylation affects its ability to bind calcium. In terms of tissue distribution, expressed in elongating spermatids and spermatozoa (at protein level). Isoform 1 is expressed in testis. Isoform 3 and isoform 5 are also expressed in brain, pancreas and numerous brain tumors.

Its subcellular location is the cytoplasm. The protein localises to the cytoskeleton. It localises to the cell projection. It is found in the cilium. The protein resides in the flagellum. Its subcellular location is the nucleus. In terms of biological role, may function as a regulator of both motility- and head-associated functions such as capacitation and the acrosome reaction. Isoform 1 binds calcium in vitro. Isoform 2 and isoform 6 probably bind calcium. Isoform 3 and isoform 5 do not bind calcium in vitro. Isoform 4 probably does not bind calcium. This chain is Calcium-binding tyrosine phosphorylation-regulated protein (CABYR), found in Homo sapiens (Human).